The primary structure comprises 437 residues: Enolase superfamily member DDB_G0284701 (437 aa).

Lys217 acts as the Proton acceptor in catalysis. Positions 251, 279, and 321 each coordinate Mn(2+). Asp395 functions as the Proton donor in the catalytic mechanism.

Belongs to the mandelate racemase/muconate lactonizing enzyme family.

This chain is Enolase superfamily member DDB_G0284701, found in Dictyostelium discoideum (Social amoeba).